The sequence spans 394 residues: Chorismate synthase (394 aa).

Residues Arg42 and Arg48 each coordinate NADP(+). Residues Arg137–Ser139, Gln258–Ala259, Gly302, Lys317–Thr321, and Arg343 contribute to the FMN site.

The protein belongs to the chorismate synthase family. As to quaternary structure, homotetramer. FMNH2 is required as a cofactor.

It catalyses the reaction 5-O-(1-carboxyvinyl)-3-phosphoshikimate = chorismate + phosphate. Its pathway is metabolic intermediate biosynthesis; chorismate biosynthesis; chorismate from D-erythrose 4-phosphate and phosphoenolpyruvate: step 7/7. Catalyzes the anti-1,4-elimination of the C-3 phosphate and the C-6 proR hydrogen from 5-enolpyruvylshikimate-3-phosphate (EPSP) to yield chorismate, which is the branch point compound that serves as the starting substrate for the three terminal pathways of aromatic amino acid biosynthesis. This reaction introduces a second double bond into the aromatic ring system. In Streptomyces coelicolor (strain ATCC BAA-471 / A3(2) / M145), this protein is Chorismate synthase.